Reading from the N-terminus, the 175-residue chain is Universal stress protein A-like protein (175 aa).

AMP is bound by residues Ala-11, Val-12, Asn-13, Ser-26, Cys-27, Val-53, Gly-131, Arg-133, Thr-145, Val-146, and Ser-147.

It belongs to the universal stress protein A family. As to quaternary structure, homohexamer.

In Arabidopsis thaliana (Mouse-ear cress), this protein is Universal stress protein A-like protein.